We begin with the raw amino-acid sequence, 57 residues long: UPF0057 membrane protein T23F2.5 (57 aa).

The next 2 membrane-spanning stretches (helical) occupy residues 3–23 (LTCTDIPKFLCALLLPPIGVW) and 36–56 (ILLTILGYIPGIIHACYVILA).

This sequence belongs to the UPF0057 (PMP3) family.

It is found in the membrane. In Caenorhabditis elegans, this protein is UPF0057 membrane protein T23F2.5.